Here is a 143-residue protein sequence, read N- to C-terminus: MQLNDLKPAKGARHQKLRVGRGIGSGKGKTAGRGHKGQHSRAGGYHKVGFEGGQMPLQRRVPKFGFTSRKELISAEVRLGELNKISGDVVDLASLKAANIISRQIKRVKIFAAGKLEKPVTIRGLRVTKGVKAAVEAAGGKIE.

The tract at residues 20-52 is disordered; it reads GRGIGSGKGKTAGRGHKGQHSRAGGYHKVGFEG. Over residues 30–39 the composition is skewed to basic residues; it reads TAGRGHKGQH.

Belongs to the universal ribosomal protein uL15 family. Part of the 50S ribosomal subunit.

Binds to the 23S rRNA. The polypeptide is Large ribosomal subunit protein uL15 (Coxiella burnetii (strain CbuG_Q212) (Coxiella burnetii (strain Q212))).